The following is a 170-amino-acid chain: Large ribosomal subunit protein uL15 (170 aa).

Over residues 1-12 (MKLHDLRPAEGS) the composition is skewed to basic and acidic residues. Residues 1 to 50 (MKLHDLRPAEGSHRKRKRIGRGHGSGKVKTGGKGMMGQKARSGPGPYRTF) are disordered. Residues 13-26 (HRKRKRIGRGHGSG) are compositionally biased toward basic residues.

Belongs to the universal ribosomal protein uL15 family. As to quaternary structure, part of the 50S ribosomal subunit.

Binds to the 23S rRNA. The chain is Large ribosomal subunit protein uL15 from Chloroflexus aggregans (strain MD-66 / DSM 9485).